Here is a 355-residue protein sequence, read N- to C-terminus: Guanine nucleotide-binding protein G(z) subunit alpha (355 aa).

Residues 1-14 are compositionally biased toward basic and acidic residues; sequence MGCRQSSEEKEAAR. Positions 1 to 26 are disordered; that stretch reads MGCRQSSEEKEAARRSRRIDRHLRSE. A lipid anchor (N-myristoyl glycine) is attached at glycine 2. Cysteine 3 is lipidated: S-palmitoyl cysteine. The G-alpha domain occupies 32–355; it reads REIKLLLLGT…QNNLKYIGLC (324 aa). A G1 motif region spans residues 35–48; the sequence is KLLLLGTSNSGKST. Residues 40 to 47, 176 to 182, 201 to 205, 270 to 273, and alanine 327 contribute to the GTP site; these read GTSNSGKS, LRSRDMT, DVGGQ, and NKKD. Serine 47 and threonine 182 together coordinate Mg(2+). The G2 motif stretch occupies residues 174–182; the sequence is DILRSRDMT. The tract at residues 197-206 is G3 motif; sequence FKMVDVGGQR. Residues 266–273 form a G4 motif region; sequence ILFLNKKD. The segment at 325-330 is G5 motif; the sequence is TCATDT.

The protein belongs to the G-alpha family. G(i/o/t/z) subfamily. G-proteins are composed of 3 units; alpha, beta and gamma. The alpha chain contains the guanine nucleotide binding site. Interacts with ADGRB2.

The protein resides in the membrane. Guanine nucleotide-binding proteins (G proteins) are involved as modulators or transducers in various transmembrane signaling systems. The polypeptide is Guanine nucleotide-binding protein G(z) subunit alpha (Gnaz) (Mus musculus (Mouse)).